Here is a 400-residue protein sequence, read N- to C-terminus: Tryptophan synthase beta chain (400 aa).

At Lys-95 the chain carries N6-(pyridoxal phosphate)lysine.

The protein belongs to the TrpB family. In terms of assembly, tetramer of two alpha and two beta chains. Pyridoxal 5'-phosphate serves as cofactor.

It carries out the reaction (1S,2R)-1-C-(indol-3-yl)glycerol 3-phosphate + L-serine = D-glyceraldehyde 3-phosphate + L-tryptophan + H2O. It functions in the pathway amino-acid biosynthesis; L-tryptophan biosynthesis; L-tryptophan from chorismate: step 5/5. In terms of biological role, the beta subunit is responsible for the synthesis of L-tryptophan from indole and L-serine. The protein is Tryptophan synthase beta chain of Chlorobaculum tepidum (strain ATCC 49652 / DSM 12025 / NBRC 103806 / TLS) (Chlorobium tepidum).